The sequence spans 682 residues: Methionine--tRNA ligase (682 aa).

A 'HIGH' region motif is present at residues 15-25 (PYANGAIHLGH). Residues Cys-146, Cys-149, Cys-159, and Cys-162 each contribute to the Zn(2+) site. A 'KMSKS' region motif is present at residues 331–335 (KMSKS). Position 334 (Lys-334) interacts with ATP. The region spanning 580–682 (DLAKLDMRVA…NGVTAGMQVK (103 aa)) is the tRNA-binding domain.

It belongs to the class-I aminoacyl-tRNA synthetase family. MetG type 1 subfamily. As to quaternary structure, homodimer. Zn(2+) is required as a cofactor.

The protein resides in the cytoplasm. It catalyses the reaction tRNA(Met) + L-methionine + ATP = L-methionyl-tRNA(Met) + AMP + diphosphate. Is required not only for elongation of protein synthesis but also for the initiation of all mRNA translation through initiator tRNA(fMet) aminoacylation. The protein is Methionine--tRNA ligase of Haemophilus influenzae (strain 86-028NP).